Reading from the N-terminus, the 434-residue chain is Enolase (434 aa).

The disordered stretch occupies residues Ser29–Lys56. Basic and acidic residues predominate over residues Glu47–Lys56. Gln163 serves as a coordination point for (2R)-2-phosphoglycerate. Catalysis depends on Glu205, which acts as the Proton donor. 3 residues coordinate Mg(2+): Asp242, Glu285, and Asp312. (2R)-2-phosphoglycerate contacts are provided by Lys337, Arg366, Ser367, and Lys388. Lys337 functions as the Proton acceptor in the catalytic mechanism.

This sequence belongs to the enolase family. Homooctamer. Requires Mg(2+) as cofactor.

It is found in the cytoplasm. It localises to the secreted. The protein localises to the cell surface. It carries out the reaction (2R)-2-phosphoglycerate = phosphoenolpyruvate + H2O. It functions in the pathway carbohydrate degradation; glycolysis; pyruvate from D-glyceraldehyde 3-phosphate: step 4/5. Functionally, catalyzes the reversible conversion of 2-phosphoglycerate (2-PG) into phosphoenolpyruvate (PEP). It is essential for the degradation of carbohydrates via glycolysis. This chain is Enolase, found in Nitratidesulfovibrio vulgaris (strain DSM 19637 / Miyazaki F) (Desulfovibrio vulgaris).